Here is a 512-residue protein sequence, read N- to C-terminus: Lysine--tRNA ligase (512 aa).

Residues Glu421 and Glu428 each coordinate Mg(2+).

Belongs to the class-II aminoacyl-tRNA synthetase family. Homodimer. Mg(2+) serves as cofactor.

The protein resides in the cytoplasm. It catalyses the reaction tRNA(Lys) + L-lysine + ATP = L-lysyl-tRNA(Lys) + AMP + diphosphate. The protein is Lysine--tRNA ligase of Aeromonas salmonicida (strain A449).